The sequence spans 196 residues: Gastrula zinc finger protein XlCGF8.2DB (196 aa).

C2H2-type zinc fingers lie at residues 6–28 (FTCKECGKGFTQKRNLASHMTIH), 34–56 (FSCTECGKGFTQKRNLASHLTIH), 62–84 (FPCTECGKGFTQKSNLVSHMKIH), 90–112 (FTCTECGKEFAHKHRLLGHLKIH), 118–140 (FSCTECGKHFAHKYHLVSHMKIH), 146–168 (FTCTECGEHFANKVSLLGHLKMH), and 174–196 (FTCTECGNSFTQVSSLVSHMKIH).

This sequence belongs to the krueppel C2H2-type zinc-finger protein family.

It is found in the nucleus. In terms of biological role, may be involved in transcriptional regulation. This Xenopus laevis (African clawed frog) protein is Gastrula zinc finger protein XlCGF8.2DB.